A 157-amino-acid polypeptide reads, in one-letter code: 17.8 kDa class I heat shock protein (157 aa).

One can recognise a sHSP domain in the interval 41–156 (ETSAITNARV…KAQVKSIDIS (116 aa)).

This sequence belongs to the small heat shock protein (HSP20) family. Homodimer under normal physiological conditions. Aggregates in high oligomeric complexes after heat shock. Binds to AKR2A and to chloroplasts. As to expression, expressed ubiquitously at low levels under normal physiological conditions.

The protein resides in the cytoplasm. Its function is as follows. Cytosolic mediator for sorting and targeting of nascent chloroplast outer envelope membrane (OEM) proteins to the chloroplast. Functions as an AKR2A cofactor to facilitate the targeting of OEP7 to chloroplasts. The polypeptide is 17.8 kDa class I heat shock protein (HSP17.8) (Arabidopsis thaliana (Mouse-ear cress)).